The sequence spans 84 residues: Defensin-like protein 116 (84 aa).

A signal peptide spans 1 to 24 (MAITKNMLVVLLLTIIFVTSSVHC). Cystine bridges form between Cys-40/Cys-80, Cys-46/Cys-71, Cys-55/Cys-78, and Cys-59/Cys-79.

This sequence belongs to the DEFL family.

The protein localises to the secreted. The chain is Defensin-like protein 116 from Arabidopsis thaliana (Mouse-ear cress).